The chain runs to 375 residues: Chaperone protein DnaJ (375 aa).

The region spanning 4-69 is the J domain; the sequence is DLYETLGVQK…QKRAAYDRYG (66 aa). A CR-type zinc finger spans residues 133 to 211; sequence GKTAQIRVPT…CHGQGRVVEE (79 aa). 8 residues coordinate Zn(2+): C146, C149, C163, C166, C185, C188, C199, and C202. CXXCXGXG motif repeat units lie at residues 146–153, 163–170, 185–192, and 199–206; these read CDVCTGTG, CGTCQGTG, CPTCGGRG, and CTKCHGQG.

This sequence belongs to the DnaJ family. As to quaternary structure, homodimer. Zn(2+) serves as cofactor.

The protein localises to the cytoplasm. Its function is as follows. Participates actively in the response to hyperosmotic and heat shock by preventing the aggregation of stress-denatured proteins and by disaggregating proteins, also in an autonomous, DnaK-independent fashion. Unfolded proteins bind initially to DnaJ; upon interaction with the DnaJ-bound protein, DnaK hydrolyzes its bound ATP, resulting in the formation of a stable complex. GrpE releases ADP from DnaK; ATP binding to DnaK triggers the release of the substrate protein, thus completing the reaction cycle. Several rounds of ATP-dependent interactions between DnaJ, DnaK and GrpE are required for fully efficient folding. Also involved, together with DnaK and GrpE, in the DNA replication of plasmids through activation of initiation proteins. The sequence is that of Chaperone protein DnaJ from Sinorhizobium medicae (strain WSM419) (Ensifer medicae).